The sequence spans 275 residues: 2,3,4,5-tetrahydropyridine-2,6-dicarboxylate N-succinyltransferase (275 aa).

The substrate site is built by Arg-104 and Asp-141.

This sequence belongs to the transferase hexapeptide repeat family. As to quaternary structure, homotrimer.

It localises to the cytoplasm. The catalysed reaction is (S)-2,3,4,5-tetrahydrodipicolinate + succinyl-CoA + H2O = (S)-2-succinylamino-6-oxoheptanedioate + CoA. Its pathway is amino-acid biosynthesis; L-lysine biosynthesis via DAP pathway; LL-2,6-diaminopimelate from (S)-tetrahydrodipicolinate (succinylase route): step 1/3. The polypeptide is 2,3,4,5-tetrahydropyridine-2,6-dicarboxylate N-succinyltransferase (Tolumonas auensis (strain DSM 9187 / NBRC 110442 / TA 4)).